Here is a 486-residue protein sequence, read N- to C-terminus: Cardiolipin synthase A (486 aa).

2 helical membrane passes run 3–23 (TFYTVISWLLVFSYWLLIAGV) and 38–58 (MAWLLVIYILPLVGIVAYLSF). PLD phosphodiesterase domains are found at residues 219–246 (MDLRQHRKIILIDSRIAYTGSMNMVDPR) and 399–426 (KDGLLHTKSVLVDGQLSLVGTVNLDMRS). Active-site residues include His-224, Lys-226, Asp-231, His-404, Lys-406, and Asp-411.

Belongs to the phospholipase D family. Cardiolipin synthase subfamily. ClsA sub-subfamily.

The protein resides in the cell inner membrane. It carries out the reaction 2 a 1,2-diacyl-sn-glycero-3-phospho-(1'-sn-glycerol) = a cardiolipin + glycerol. Catalyzes the reversible phosphatidyl group transfer from one phosphatidylglycerol molecule to another to form cardiolipin (CL) (diphosphatidylglycerol) and glycerol. The protein is Cardiolipin synthase A of Pectobacterium atrosepticum (strain SCRI 1043 / ATCC BAA-672) (Erwinia carotovora subsp. atroseptica).